The primary structure comprises 355 residues: Capsular polysaccharide biosynthesis glycosyltransferase CapH (355 aa).

This sequence belongs to the glycosyltransferase group 1 family. Glycosyltransferase 4 subfamily.

The protein operates within capsule biogenesis; capsule polysaccharide biosynthesis. Required for the biosynthesis of type 1 capsular polysaccharide. This chain is Capsular polysaccharide biosynthesis glycosyltransferase CapH (capH), found in Staphylococcus aureus.